The following is a 945-amino-acid chain: Xylosyltransferase 1 (945 aa).

Residues 1–17 (MQAAPCARRLARRSHSA) lie on the Cytoplasmic side of the membrane. A helical; Signal-anchor for type II membrane protein membrane pass occupies residues 18–38 (LLAALTVLLLQTLVVWNFSSL). The Lumenal segment spans residues 39–945 (DSGAGERRGG…GAVKPDGRLR (907 aa)). The segment at 42–245 (AGERRGGAAV…KYDQPPKCDI (204 aa)) is disordered. A compositionally biased stretch (gly residues) spans 76–103 (RGGGGGGGGCGGGGRGPQARARGGGPGE). Basic and acidic residues predominate over residues 131-147 (KVRTDSNNENSVPKDFE). Polar residues predominate over residues 149–158 (VDNSNFAPRT). Residues 163–190 (HQPELAKKPPSRQKELLKRKLEQQEKGK) show a composition bias toward basic and acidic residues. The N-linked (GlcNAc...) asparagine glycan is linked to N212. Positions 235–245 (TKYDQPPKCDI) are enriched in basic and acidic residues. 4 cysteine pairs are disulfide-bonded: C243-C271, C287-C528, C547-C560, and C549-C558. UDP-alpha-D-xylose contacts are provided by residues V319, D347, and 376 to 378 (TIW). N-linked (GlcNAc...) asparagine glycosylation is present at N407. 480-481 (DW) contacts UDP-alpha-D-xylose. Residues S561 and 584–585 (RK) contribute to the UDP-alpha-D-xylose site. 2 disulfides stabilise this stretch: C661–C913 and C906–C919. N-linked (GlcNAc...) asparagine glycosylation occurs at N763. The tract at residues 926 to 945 (SFSPDPKSELGAVKPDGRLR) is disordered.

The protein belongs to the glycosyltransferase 14 family. XylT subfamily. As to quaternary structure, monomer. It depends on a divalent metal cation as a cofactor. Post-translationally, contains 7 disulfide bonds. In terms of processing, N-glycosylated.

Its subcellular location is the golgi apparatus membrane. The catalysed reaction is UDP-alpha-D-xylose + L-seryl-[protein] = 3-O-(beta-D-xylosyl)-L-seryl-[protein] + UDP + H(+). The protein operates within glycan metabolism; chondroitin sulfate biosynthesis. It functions in the pathway glycan metabolism; heparan sulfate biosynthesis. Catalyzes the first step in the biosynthesis of chondroitin sulfate and dermatan sulfate proteoglycans, such as DCN. Transfers D-xylose from UDP-D-xylose to specific serine residues of the core protein. Required for normal maturation of chondrocytes during bone development, normal onset of ossification and normal embryonic and postnatal skeleton development, especially of the long bones. This is Xylosyltransferase 1 (XYLT1) from Pan troglodytes (Chimpanzee).